Consider the following 458-residue polypeptide: Exodeoxyribonuclease 7 large subunit (458 aa).

Belongs to the XseA family. As to quaternary structure, heterooligomer composed of large and small subunits.

The protein resides in the cytoplasm. It catalyses the reaction Exonucleolytic cleavage in either 5'- to 3'- or 3'- to 5'-direction to yield nucleoside 5'-phosphates.. Functionally, bidirectionally degrades single-stranded DNA into large acid-insoluble oligonucleotides, which are then degraded further into small acid-soluble oligonucleotides. This chain is Exodeoxyribonuclease 7 large subunit, found in Geobacter sp. (strain M21).